A 79-amino-acid chain; its full sequence is Short neurotoxin 6 (79 aa).

Positions 1 to 21 (MKTLLLTLVMVTIMCLDLGYT) are cleaved as a signal peptide. 4 disulfide bridges follow: cysteine 24/cysteine 41, cysteine 34/cysteine 59, cysteine 63/cysteine 71, and cysteine 72/cysteine 77.

The protein belongs to the three-finger toxin family. Short-chain subfamily. Type III alpha-neurotoxin sub-subfamily. As to expression, expressed by the venom gland.

The protein resides in the secreted. Its function is as follows. Binds with high affinity to muscle nicotinic acetylcholine receptor (nAChR) and hinders acetylcholine binding to the receptor, thereby impairing neuromuscular transmission. Competes with the binding of alpha-bungarotoxin on muscle AChR (from Torpedo) with an IC(50) of 0.18 uM. Causes muscle paralysis, spasms and increased respiration. This chain is Short neurotoxin 6, found in Pseudonaja textilis (Eastern brown snake).